A 256-amino-acid polypeptide reads, in one-letter code: NAD-dependent protein deacylase 4 (256 aa).

The 250-residue stretch at Met-1 to Gly-250 folds into the Deacetylase sirtuin-type domain. Gly-19 to Trp-39 is an NAD(+) binding site. Residues Tyr-64 and Arg-67 each coordinate substrate. NAD(+) is bound at residue Gln-98 to Asp-101. The Proton acceptor role is filled by His-116. Zn(2+) is bound by residues Cys-124, Cys-127, Cys-152, and Cys-155. NAD(+)-binding positions include Gly-192–Ser-194, Asn-218–Val-220, and Ala-236.

It belongs to the sirtuin family. Class III subfamily. The cofactor is Zn(2+).

The protein localises to the cytoplasm. It carries out the reaction N(6)-acetyl-L-lysyl-[protein] + NAD(+) + H2O = 2''-O-acetyl-ADP-D-ribose + nicotinamide + L-lysyl-[protein]. The enzyme catalyses N(6)-succinyl-L-lysyl-[protein] + NAD(+) + H2O = 2''-O-succinyl-ADP-D-ribose + nicotinamide + L-lysyl-[protein]. NAD-dependent lysine deacetylase and desuccinylase that specifically removes acetyl and succinyl groups on target proteins. Modulates the activities of several proteins which are inactive in their acylated form. In Pseudomonas syringae pv. tomato (strain ATCC BAA-871 / DC3000), this protein is NAD-dependent protein deacylase 4.